The sequence spans 442 residues: Methionine aminopeptidase 2 (442 aa).

Positions 1–81 are disordered; sequence MAAQAPTEAL…APTAQSDPPR (81 aa). Basic residues predominate over residues 56 to 72; sequence PLRRRRRRRRTRKKKKA. A substrate-binding site is contributed by His-196. The a divalent metal cation site is built by Asp-216, Asp-227, and His-296. Substrate is bound at residue His-304. A divalent metal cation-binding residues include Glu-329 and Glu-423.

Belongs to the peptidase M24A family. Methionine aminopeptidase eukaryotic type 2 subfamily. Co(2+) serves as cofactor. It depends on Zn(2+) as a cofactor. Mn(2+) is required as a cofactor. The cofactor is Fe(2+).

The protein resides in the cytoplasm. The enzyme catalyses Release of N-terminal amino acids, preferentially methionine, from peptides and arylamides.. Functionally, cotranslationally removes the N-terminal methionine from nascent proteins. The N-terminal methionine is often cleaved when the second residue in the primary sequence is small and uncharged (Met-Ala-, Cys, Gly, Pro, Ser, Thr, or Val). This chain is Methionine aminopeptidase 2, found in Verticillium alfalfae (strain VaMs.102 / ATCC MYA-4576 / FGSC 10136) (Verticillium wilt of alfalfa).